A 116-amino-acid polypeptide reads, in one-letter code: U16-barytoxin-Tl1d (116 aa).

The first 20 residues, 1–20 (MKTIIVFLSLLVLATKFGDA), serve as a signal peptide directing secretion. Positions 21 to 74 (NEGVNQEQMKEVIQNEFREDFLNEMAAMSLLQQLEAIESTLLEKEADRNSRQKR) are excised as a propeptide. Cystine bridges form between Cys-75-Cys-90, Cys-82-Cys-95, and Cys-89-Cys-110.

This sequence belongs to the neurotoxin 14 (magi-1) family. 06 (ICK-Trit) subfamily. In terms of tissue distribution, expressed by the venom gland.

Its subcellular location is the secreted. Functionally, ion channel inhibitor. In Trittame loki (Brush-footed trapdoor spider), this protein is U16-barytoxin-Tl1d.